The sequence spans 602 residues: Bifunctional lycopene cyclase/phytoene synthase (602 aa).

Residues 1–241 (MYDYAFVHLK…IVGGMAAFDQ (241 aa)) form a lycopene beta-cyclase region. The next 7 membrane-spanning stretches (helical) occupy residues 6 to 26 (FVHL…AYPI), 30 to 50 (IHLI…LPWD), 76 to 96 (FEEL…YILF), 118 to 138 (VVKV…WNAA), 146 to 166 (YLGL…TLAG), 168 to 188 (FILS…TFYL), and 230 to 250 (MLIV…YAFP). Residues 248–602 (AFPTLFPKVN…STLLRALYEQ (355 aa)) form a phytoene synthase region.

This sequence in the N-terminal section; belongs to the lycopene beta-cyclase family. It in the C-terminal section; belongs to the phytoene/squalene synthase family.

It localises to the membrane. The enzyme catalyses all-trans-lycopene = gamma-carotene. It catalyses the reaction gamma-carotene = all-trans-beta-carotene. The catalysed reaction is 2 (2E,6E,10E)-geranylgeranyl diphosphate = 15-cis-phytoene + 2 diphosphate. It functions in the pathway carotenoid biosynthesis; beta-carotene biosynthesis. Its pathway is carotenoid biosynthesis; phytoene biosynthesis; all-trans-phytoene from geranylgeranyl diphosphate: step 1/1. In terms of biological role, bifunctional enzyme that catalyzes the reactions from geranylgeranyl diphosphate to phytoene (phytoene synthase) and from lycopene to beta-carotene via the intermediate gamma-carotene and from 3,4-didehydrolycopene to torulene (lycopene cyclase). Torulene is further processed to the acidic carotenoid neurosporaxanthin. The cyclase preferentially catalyzes single cyclizations at only one end of the substrate to produce monocyclic carotenoids. Neurosporaxanthin is synthesized from geranyl-geranyl pyrophosphate (GGPP) through several enzymatic activities. Phytoene synthase activity performed by the bifunctional enzyme al-2 first produces phytoene from geranyl-geranyl pyrophosphate (GGPP). The phytoene dehydrogenase al-1 then introduces 5 desaturations to lead to 3,4-didehydrolycopene via the intermediates phytofluene, zeta-carotene, neurosporene and lycopene. Al-2 cyclase activity then converts 3,4-didehydrolycopene into torulene. Al-2 can also convet lycopene into gamma-carotene which in turn is converted to beta-carotene by an additional al-2 cyclization reaction. Torulene is the substrate of the dioxidase cao-2 that breaks the molecule, removing five carbon atoms to yield beta-apo-4'-carotenal, whereas the aldehyde dehydrogenase ylo-1 mediates the last step by converting beta-apo-4'-carotenal into neurosporaxanthin. This chain is Bifunctional lycopene cyclase/phytoene synthase, found in Neurospora crassa (strain ATCC 24698 / 74-OR23-1A / CBS 708.71 / DSM 1257 / FGSC 987).